The sequence spans 1237 residues: Cilia- and flagella-associated protein 61 (1237 aa).

The interval Q278 to V301 is disordered. Over residues S281–L290 the composition is skewed to basic and acidic residues.

Component of axonemal radial spokes, the protein complexes that link the outer microtubule doublets with the central pair of microtubules. Interacts with CFAP91/MAATS1, ODAD2/ARMC4, RSPH3A, ROPN1, ROPN1L and RSPH9. Interacts with DYNLT1, DYNC1I2 and TUBB3. Interacts with WDR35, IFT22 and IFT81.

Its subcellular location is the cytoplasm. The protein localises to the cytoskeleton. It localises to the flagellum axoneme. Functionally, involved in sperm flagellum assembly. Plays an essential role in the formation of the radial spokes in flagellum axoneme. This is Cilia- and flagella-associated protein 61 from Homo sapiens (Human).